The primary structure comprises 431 residues: Putative serine/threonine-protein kinase B (431 aa).

One can recognise a Protein kinase domain in the interval 20–279; that stretch reads YLNKGIVGLG…VRENFQIPYI (260 aa). Residues 26 to 34 and K49 contribute to the ATP site; that span reads VGLGSYGEG. D147 serves as the catalytic Proton acceptor. The PH domain occupies 331-429; it reads DVTHRGHVNK…WVHAIQRGIG (99 aa).

This sequence belongs to the protein kinase superfamily. Ser/Thr protein kinase family.

It carries out the reaction L-seryl-[protein] + ATP = O-phospho-L-seryl-[protein] + ADP + H(+). It catalyses the reaction L-threonyl-[protein] + ATP = O-phospho-L-threonyl-[protein] + ADP + H(+). In Trypanosoma brucei brucei, this protein is Putative serine/threonine-protein kinase B (NRKB).